A 94-amino-acid polypeptide reads, in one-letter code: Na(+)/H(+) antiporter subunit F (94 aa).

3 helical membrane passes run 2-22 (FTLI…LYVI), 34-54 (VVAL…VSIL), and 59-79 (AFLD…IAFS).

Belongs to the CPA3 antiporters (TC 2.A.63) subunit F family. As to quaternary structure, forms a heterooligomeric complex that consists of seven subunits: MrpA, MrpB, MrpC, MrpD, MrpE, MrpF and MrpG.

It is found in the cell membrane. Mrp complex is a Na(+)/H(+) antiporter that is considered to be the major Na(+) excretion system in B.subtilis. Has a major role in Na(+) resistance and a minor role in Na(+)- and K(+)-dependent pH homeostasis as compared to TetB. MrpA may be the actual Na(+)/H(+) antiporter, although the six other Mrp proteins are all required for Na(+)/H(+) antiport activity and Na(+) resistance. MrpA is required for initiation of sporulation when external Na(+) concentration increases. Also transports Li(+) but not K(+), Ca(2+) or Mg(2+). Functionally, involved in cholate and Na(+) efflux activities, which may be mechanistically coupled. Does not require other Mrp proteins for its own function. The chain is Na(+)/H(+) antiporter subunit F (mrpF) from Bacillus subtilis (strain 168).